The chain runs to 512 residues: Probable malate:quinone oxidoreductase (512 aa).

It belongs to the MQO family. Requires FAD as cofactor.

The enzyme catalyses (S)-malate + a quinone = a quinol + oxaloacetate. It functions in the pathway carbohydrate metabolism; tricarboxylic acid cycle; oxaloacetate from (S)-malate (quinone route): step 1/1. The protein is Probable malate:quinone oxidoreductase of Rhodococcus erythropolis (strain PR4 / NBRC 100887).